The chain runs to 444 residues: N-succinylarginine dihydrolase (444 aa).

Residues 19–28 (AGLSFGNVAS), N110, and 137–138 (HR) each bind substrate. E174 is an active-site residue. Position 214 (R214) interacts with substrate. The active site involves H250. Residues D252 and N362 each coordinate substrate. C368 (nucleophile) is an active-site residue.

Belongs to the succinylarginine dihydrolase family. As to quaternary structure, homodimer.

It carries out the reaction N(2)-succinyl-L-arginine + 2 H2O + 2 H(+) = N(2)-succinyl-L-ornithine + 2 NH4(+) + CO2. It participates in amino-acid degradation; L-arginine degradation via AST pathway; L-glutamate and succinate from L-arginine: step 2/5. In terms of biological role, catalyzes the hydrolysis of N(2)-succinylarginine into N(2)-succinylornithine, ammonia and CO(2). The chain is N-succinylarginine dihydrolase from Shewanella amazonensis (strain ATCC BAA-1098 / SB2B).